Consider the following 352-residue polypeptide: Small ribosomal subunit biogenesis GTPase RsgA (352 aa).

The segment covering 1 to 21 has biased composition (basic residues); the sequence is MKKNKLSKNQHRRIQAHHQYR. The tract at residues 1-38 is disordered; sequence MKKNKLSKNQHRRIQAHHQYRLHPTSLTDDKNNQLDDA. Residues 116 to 278 form the CP-type G domain; it reads FYDGIKPMAA…LIDSPGIREF (163 aa). Residues 164 to 167 and 218 to 226 each bind GTP; these read NKID and GQSGVGKSS. Positions 302, 307, 309, and 315 each coordinate Zn(2+).

It belongs to the TRAFAC class YlqF/YawG GTPase family. RsgA subfamily. In terms of assembly, monomer. Associates with 30S ribosomal subunit, binds 16S rRNA. Zn(2+) is required as a cofactor.

The protein resides in the cytoplasm. Its function is as follows. One of several proteins that assist in the late maturation steps of the functional core of the 30S ribosomal subunit. Helps release RbfA from mature subunits. May play a role in the assembly of ribosomal proteins into the subunit. Circularly permuted GTPase that catalyzes slow GTP hydrolysis, GTPase activity is stimulated by the 30S ribosomal subunit. In Hamiltonella defensa subsp. Acyrthosiphon pisum (strain 5AT), this protein is Small ribosomal subunit biogenesis GTPase RsgA.